We begin with the raw amino-acid sequence, 100 residues long: Small ribosomal subunit protein uS14c (100 aa).

Belongs to the universal ribosomal protein uS14 family. As to quaternary structure, part of the 30S ribosomal subunit.

The protein resides in the plastid. Functionally, binds 16S rRNA, required for the assembly of 30S particles. The protein is Small ribosomal subunit protein uS14c of Epifagus virginiana (Beechdrops).